Consider the following 242-residue polypeptide: Phosphatidylethanolamine-binding protein 4 (242 aa).

Residues 1–26 (MTMKLVAAALCLSLLAAGLWVGLSLT) form the signal peptide. The segment at 31–50 (EEGKPGGEKPGGGKPGGSGR) is disordered. The segment covering 38-50 (EKPGGGKPGGSGR) has biased composition (gly residues). Residues Asn77 and Asn139 are each glycosylated (N-linked (GlcNAc...) asparagine). Positions 210-242 (DPDTSTQFMTQFDEELSSEFGRINDDQEQFNQK) are important for secretion.

Belongs to the phosphatidylethanolamine-binding protein family.

The protein localises to the secreted. In terms of biological role, promotes AKT phosphorylation, suggesting a possible role in the PI3K-AKT signaling pathway. This chain is Phosphatidylethanolamine-binding protein 4 (Pebp4), found in Mus musculus (Mouse).